A 305-amino-acid chain; its full sequence is Tyrosine recombinase XerC (305 aa).

The Core-binding (CB) domain occupies 1-93; the sequence is MVLDGFAAYF…AWRQYCAWLV (93 aa). The Tyr recombinase domain maps to 114–294; the sequence is RVPKALPQEW…DFDHIARLYD (181 aa). Active-site residues include R155, K179, H246, R249, and H272. Y281 serves as the catalytic O-(3'-phospho-DNA)-tyrosine intermediate.

The protein belongs to the 'phage' integrase family. XerC subfamily. Forms a cyclic heterotetrameric complex composed of two molecules of XerC and two molecules of XerD.

It is found in the cytoplasm. In terms of biological role, site-specific tyrosine recombinase, which acts by catalyzing the cutting and rejoining of the recombining DNA molecules. The XerC-XerD complex is essential to convert dimers of the bacterial chromosome into monomers to permit their segregation at cell division. It also contributes to the segregational stability of plasmids. The polypeptide is Tyrosine recombinase XerC (Neisseria gonorrhoeae (strain ATCC 700825 / FA 1090)).